Reading from the N-terminus, the 342-residue chain is Probable dual-specificity RNA methyltransferase RlmN (342 aa).

Glu91 (proton acceptor) is an active-site residue. One can recognise a Radical SAM core domain in the interval 97 to 327; it reads YKHGNSICVS…TTIRREMGAD (231 aa). Residues Cys104 and Cys332 are joined by a disulfide bond. Positions 111, 115, and 118 each coordinate [4Fe-4S] cluster. S-adenosyl-L-methionine-binding positions include 158 to 159, Ser190, 213 to 215, and Asn289; these read GE and SLH. The active-site S-methylcysteine intermediate is Cys332.

This sequence belongs to the radical SAM superfamily. RlmN family. Requires [4Fe-4S] cluster as cofactor.

It is found in the cytoplasm. The catalysed reaction is adenosine(2503) in 23S rRNA + 2 reduced [2Fe-2S]-[ferredoxin] + 2 S-adenosyl-L-methionine = 2-methyladenosine(2503) in 23S rRNA + 5'-deoxyadenosine + L-methionine + 2 oxidized [2Fe-2S]-[ferredoxin] + S-adenosyl-L-homocysteine. It catalyses the reaction adenosine(37) in tRNA + 2 reduced [2Fe-2S]-[ferredoxin] + 2 S-adenosyl-L-methionine = 2-methyladenosine(37) in tRNA + 5'-deoxyadenosine + L-methionine + 2 oxidized [2Fe-2S]-[ferredoxin] + S-adenosyl-L-homocysteine. Functionally, specifically methylates position 2 of adenine 2503 in 23S rRNA and position 2 of adenine 37 in tRNAs. The polypeptide is Probable dual-specificity RNA methyltransferase RlmN (Clostridium botulinum (strain Langeland / NCTC 10281 / Type F)).